Consider the following 335-residue polypeptide: Cytoskeleton protein RodZ (335 aa).

The Cytoplasmic segment spans residues 1–111 (MNTEATHDQN…LGKRRKKRDG (111 aa)). The region spanning 19–71 (LRNAREQLGLSQQAVAERLCLKVSTVRDIEEDKAPADLASTFLRGYIRSYARL) is the HTH cro/C1-type domain. A DNA-binding region (H-T-H motif) is located at residues 30-49 (QQAVAERLCLKVSTVRDIEE). The chain crosses the membrane as a helical; Signal-anchor for type II membrane protein span at residues 112-132 (WLMTFTWLVLFVVIGLSGAWW). Residues 133–335 (WQDHKAQQEE…TLNAEQSPAQ (203 aa)) are Periplasmic-facing. Over residues 148-164 (DQSSAELNNNQSQSVPL) the composition is skewed to polar residues. The tract at residues 148-244 (DQSSAELNNN…PLPTDQAGVT (97 aa)) is disordered. 2 stretches are compositionally biased toward low complexity: residues 165–205 (DTST…DPQQ) and 217–239 (DTAATPAPAATTTPDGAAPLPTD).

Belongs to the RodZ family.

It localises to the cell inner membrane. In terms of biological role, cytoskeletal protein that is involved in cell-shape control through regulation of the length of the long axis. This is Cytoskeleton protein RodZ from Escherichia coli O6:H1 (strain CFT073 / ATCC 700928 / UPEC).